We begin with the raw amino-acid sequence, 220 residues long: MKRSASDSPLLFDLPLAPDFSQEQQLMKRGLKHIAGIDEAGRGPLAGPVVAAAVVLDQNDLPEGLDDSKRLTAARREALYEIILTKAITVSVASLSARSIDASDIRKAALEAMRRAVIGLTLKPCHALVDGRDVPPGLPCPGSALVKGDQRSVSIAAASIVAKVTRDRMMIRAGAAHPPYGLEIHAGYATQKHRAAIESEGPVPGLHRYTFAPIKGRFDC.

The region spanning 32-220 is the RNase H type-2 domain; it reads KHIAGIDEAG…FAPIKGRFDC (189 aa). Residues Asp-38, Glu-39, and Asp-130 each contribute to the a divalent metal cation site.

This sequence belongs to the RNase HII family. Mn(2+) serves as cofactor. Mg(2+) is required as a cofactor.

The protein resides in the cytoplasm. It carries out the reaction Endonucleolytic cleavage to 5'-phosphomonoester.. Endonuclease that specifically degrades the RNA of RNA-DNA hybrids. This is Ribonuclease HII from Brucella canis (strain ATCC 23365 / NCTC 10854 / RM-666).